A 307-amino-acid chain; its full sequence is Elongation factor Ts (307 aa).

Residues 79 to 82 (TDFV) form an involved in Mg(2+) ion dislocation from EF-Tu region.

Belongs to the EF-Ts family.

Its subcellular location is the cytoplasm. Associates with the EF-Tu.GDP complex and induces the exchange of GDP to GTP. It remains bound to the aminoacyl-tRNA.EF-Tu.GTP complex up to the GTP hydrolysis stage on the ribosome. In Bartonella tribocorum (strain CIP 105476 / IBS 506), this protein is Elongation factor Ts.